Here is an 806-residue protein sequence, read N- to C-terminus: MAAGKFASYHRNVQMNHPLVSSMDLLGSKSALGERRSDAFKNVCIHGTLPRKKKERVPIRSSDMFCHMGTLPHTKSHRLPNPLMQDIKEDYPFQERRTGIFNMREHYLDPAMEYVKFSKDRYIMDGGTPDKLKKELEEELKLNSEDLRSHAWYHGRIPRQVSESLVKRDGDFLIRDSLSSPGNLVLTCQWKNLSQHFKINKVVIRLNEAYCRIQYQLEHESFDSIPALVRFYVGNRKAVSQQSGAIIFQPINRTVPLRCIEEKYGTSPVRRLELGIMEVKSEPTKRLSLNFGQGISQEQSLVRGNLLRNKEKSGSQPACLDNMREKRRPLKAHQSESYLPLGSRQPCLSQGMDMKTSPKPHVFRTGSEPTLSPTEIRRFNHEVHPVEALRGSDSQLCPRPPPKPTKAPSIKQSQSPLVWQSSEANYCEFHPTPPEDCAWSDSHSSHNSYIEDQRTDEIETLSFSNSELSFPALDDSISQCSATDFCGNVEDDEFIRPVYETVSSFCPNDFQSVLLTAENKPLETSLLRRAKELFTNNDPRTIAKHILRMDCKVARILDVTPEVERMMGVSSGLELIILPYGHQLRLDLMERHSTMAIGIAVDILGCTGNLEERVATLHKIIQLAVEVKTLGDYFAFSAIMKALDMPQITRLEQTWTMLRHQYTQTAITYEKQLKPFSKYLHEGEALDAQEDVTVPLVMPLVTLLERQSVLFEGMDFWENNDRGCEILFNHLQTARQVAHNATVYKKNAQRILEGFKPDELMSEIFKTEFQMRLLWGSKGALLKQSERYHKFGQILTALSRKLEPPS.

The region spanning 152–251 (WYHGRIPRQV…QSGAIIFQPI (100 aa)) is the SH2 domain. Disordered stretches follow at residues 308–343 (RNKE…PLGS) and 390–412 (RGSD…SIKQ). Positions 538–805 (DPRTIAKHIL…TALSRKLEPP (268 aa)) constitute a Ras-GEF domain.

May act as an adapter protein. The chain is Breast cancer anti-estrogen resistance protein 3 homolog (bcar3) from Xenopus laevis (African clawed frog).